We begin with the raw amino-acid sequence, 249 residues long: Probable transcriptional regulatory protein Dtur_1615 (249 aa).

This sequence belongs to the TACO1 family.

It is found in the cytoplasm. This is Probable transcriptional regulatory protein Dtur_1615 from Dictyoglomus turgidum (strain DSM 6724 / Z-1310).